A 453-amino-acid polypeptide reads, in one-letter code: Serine incorporator 1 (453 aa).

Gly-2 carries the N-myristoyl glycine lipid modification. Residues 2–39 (GSVLGLCSMASWIPCLCGSAPCLLCRCCPSGNNSTVTR) lie on the Cytoplasmic side of the membrane. Residues 40–60 (LIYALFLLVGVCVACVMLIPG) traverse the membrane as a helical segment. The Lumenal portion of the chain corresponds to 61-88 (MEEQLNKIPGFCENEKGMVPCNILVGYK). A helical membrane pass occupies residues 89 to 109 (AVYRLCFGLAMFYLLLSLLMI). Topologically, residues 110-123 (KVKSSSDPRAAIHN) are cytoplasmic. The chain crosses the membrane as a helical span at residues 124-144 (GFWFFKFAAAIAIIIGAFFIP). At 145–151 (EGTFTTV) the chain is on the lumenal side. A helical transmembrane segment spans residues 152–172 (WFYVGMAGAFCFILIQLVLLI). The Cytoplasmic segment spans residues 173-197 (DFAHSWNESWVEKMEEGNSRCWYAA). The chain crosses the membrane as a helical span at residues 198–218 (LLSATALNYLLSLVAVVLFFV). Residues 219–231 (YYTHPASCAENKA) lie on the Lumenal side of the membrane. A helical transmembrane segment spans residues 232 to 252 (FISVNMLLCLGASIMSILPKI). The Cytoplasmic segment spans residues 253-259 (QESQPRS). A helical transmembrane segment spans residues 260 to 280 (GLLQSSVITVYTMYLTWSAMT). The Lumenal segment spans residues 281–309 (NEPETECNPSLLNIIGYNTTSTVSKEGQS). A helical transmembrane segment spans residues 310-330 (VQWWHTQGIIGLILFLLCVFY). The Cytoplasmic segment spans residues 331–387 (SSIRTSNNSQVNKLTLTSDESTLIEDGGARNDGSLEDGDDVHRAVDNERDGVTYSYS). Ser-351 carries the post-translational modification Phosphoserine. Phosphothreonine is present on Thr-352. Ser-364 bears the Phosphoserine mark. The chain crosses the membrane as a helical span at residues 388-408 (FFHFMLFLASLYIMMTLTNWY). Over 409–426 (RYEPSREMKSQWTAVWVK) the chain is Lumenal. The helical transmembrane segment at 427–447 (ISSSWIGIVLYVWTLVAPLVL) threads the bilayer. The Cytoplasmic segment spans residues 448-453 (TNRDFD).

Belongs to the TDE1 family. In terms of assembly, interacts with SPTLC1.

It is found in the endoplasmic reticulum membrane. Enhances the incorporation of serine into phosphatidylserine and sphingolipids. The chain is Serine incorporator 1 (SERINC1) from Bos taurus (Bovine).